A 199-amino-acid chain; its full sequence is 3-isopropylmalate dehydratase small subunit (199 aa).

It belongs to the LeuD family. LeuD type 1 subfamily. As to quaternary structure, heterodimer of LeuC and LeuD.

The catalysed reaction is (2R,3S)-3-isopropylmalate = (2S)-2-isopropylmalate. The protein operates within amino-acid biosynthesis; L-leucine biosynthesis; L-leucine from 3-methyl-2-oxobutanoate: step 2/4. Its function is as follows. Catalyzes the isomerization between 2-isopropylmalate and 3-isopropylmalate, via the formation of 2-isopropylmaleate. This Aeromonas salmonicida (strain A449) protein is 3-isopropylmalate dehydratase small subunit.